Here is a 166-residue protein sequence, read N- to C-terminus: Protein-export protein SecB (166 aa).

The protein belongs to the SecB family. In terms of assembly, homotetramer, a dimer of dimers. One homotetramer interacts with 1 SecA dimer.

The protein resides in the cytoplasm. Its function is as follows. One of the proteins required for the normal export of preproteins out of the cell cytoplasm. It is a molecular chaperone that binds to a subset of precursor proteins, maintaining them in a translocation-competent state. It also specifically binds to its receptor SecA. This Actinobacillus pleuropneumoniae serotype 5b (strain L20) protein is Protein-export protein SecB.